The primary structure comprises 435 residues: Methylenetetrahydrofolate--tRNA-(uracil-5-)-methyltransferase TrmFO (435 aa).

Gly10–Gly15 contributes to the FAD binding site.

It belongs to the MnmG family. TrmFO subfamily. FAD is required as a cofactor.

The protein resides in the cytoplasm. It catalyses the reaction uridine(54) in tRNA + (6R)-5,10-methylene-5,6,7,8-tetrahydrofolate + NADH + H(+) = 5-methyluridine(54) in tRNA + (6S)-5,6,7,8-tetrahydrofolate + NAD(+). The catalysed reaction is uridine(54) in tRNA + (6R)-5,10-methylene-5,6,7,8-tetrahydrofolate + NADPH + H(+) = 5-methyluridine(54) in tRNA + (6S)-5,6,7,8-tetrahydrofolate + NADP(+). Catalyzes the folate-dependent formation of 5-methyl-uridine at position 54 (M-5-U54) in all tRNAs. This is Methylenetetrahydrofolate--tRNA-(uracil-5-)-methyltransferase TrmFO from Halalkalibacterium halodurans (strain ATCC BAA-125 / DSM 18197 / FERM 7344 / JCM 9153 / C-125) (Bacillus halodurans).